The primary structure comprises 415 residues: Enolase (415 aa).

Residue Gln161 participates in (2R)-2-phosphoglycerate binding. Glu203 (proton donor) is an active-site residue. The Mg(2+) site is built by Asp240, Glu281, and Asp308. (2R)-2-phosphoglycerate contacts are provided by Lys333, Arg362, Ser363, and Lys384. The active-site Proton acceptor is the Lys333.

It belongs to the enolase family. The cofactor is Mg(2+).

It is found in the cytoplasm. It localises to the secreted. Its subcellular location is the cell surface. It carries out the reaction (2R)-2-phosphoglycerate = phosphoenolpyruvate + H2O. It functions in the pathway carbohydrate degradation; glycolysis; pyruvate from D-glyceraldehyde 3-phosphate: step 4/5. Functionally, catalyzes the reversible conversion of 2-phosphoglycerate (2-PG) into phosphoenolpyruvate (PEP). It is essential for the degradation of carbohydrates via glycolysis. In Campylobacter hominis (strain ATCC BAA-381 / DSM 21671 / CCUG 45161 / LMG 19568 / NCTC 13146 / CH001A), this protein is Enolase.